The primary structure comprises 524 residues: Leukotriene-B4 omega-hydroxylase 3 (524 aa).

Heme-binding residues include E328 and C468.

Belongs to the cytochrome P450 family. The cofactor is heme.

It localises to the endoplasmic reticulum membrane. Its subcellular location is the microsome membrane. It carries out the reaction leukotriene B4 + reduced [NADPH--hemoprotein reductase] + O2 = 20-hydroxy-leukotriene B4 + oxidized [NADPH--hemoprotein reductase] + H2O + H(+). It functions in the pathway lipid metabolism; leukotriene B4 degradation. Cytochromes P450 are a group of heme-thiolate monooxygenases. Catalyzes the omega-hydroxylation of LTB4. The sequence is that of Leukotriene-B4 omega-hydroxylase 3 (Cyp4f14) from Mus musculus (Mouse).